A 534-amino-acid polypeptide reads, in one-letter code: ATP synthase subunit beta 2 (534 aa).

Residues 1–10 (MADPQATNGT) show a composition bias toward polar residues. Residues 1-30 (MADPQATNGTGAACAERDASDVGDVSDVGD) are disordered. Residue 185–192 (GGAGVGKT) participates in ATP binding. Positions 494–505 (AAAREADARREA) are enriched in basic and acidic residues. The interval 494-534 (AAAREADARREAAAAASGAGPGTTSDPASGSAEPQGARHGR) is disordered.

It belongs to the ATPase alpha/beta chains family. As to quaternary structure, F-type ATPases have 2 components, CF(1) - the catalytic core - and CF(0) - the membrane proton channel. CF(1) has five subunits: alpha(3), beta(3), gamma(1), delta(1), epsilon(1). CF(0) has three main subunits: a(1), b(2) and c(9-12). The alpha and beta chains form an alternating ring which encloses part of the gamma chain. CF(1) is attached to CF(0) by a central stalk formed by the gamma and epsilon chains, while a peripheral stalk is formed by the delta and b chains.

Its subcellular location is the cell inner membrane. The enzyme catalyses ATP + H2O + 4 H(+)(in) = ADP + phosphate + 5 H(+)(out). Functionally, produces ATP from ADP in the presence of a proton gradient across the membrane. The catalytic sites are hosted primarily by the beta subunits. The sequence is that of ATP synthase subunit beta 2 from Burkholderia pseudomallei (strain 668).